Here is a 23-residue protein sequence, read N- to C-terminus: Protein DCL, chloroplastic (23 aa).

It localises to the plastid. It is found in the chloroplast. In terms of biological role, has a function in the early stage of chloroplast development and palisade cell morphogenesis. The chain is Protein DCL, chloroplastic from Pseudotsuga menziesii (Douglas-fir).